The following is a 211-amino-acid chain: Uracil phosphoribosyltransferase (211 aa).

5-phospho-alpha-D-ribose 1-diphosphate is bound by residues Arg-78, Arg-103, and 130–138; that span reads DPMLATGNS. Uracil-binding positions include Ile-193 and 198–200; that span reads GDA. Asp-199 provides a ligand contact to 5-phospho-alpha-D-ribose 1-diphosphate.

Belongs to the UPRTase family. Mg(2+) is required as a cofactor.

The enzyme catalyses UMP + diphosphate = 5-phospho-alpha-D-ribose 1-diphosphate + uracil. The protein operates within pyrimidine metabolism; UMP biosynthesis via salvage pathway; UMP from uracil: step 1/1. Its activity is regulated as follows. Allosterically activated by GTP. Its function is as follows. Catalyzes the conversion of uracil and 5-phospho-alpha-D-ribose 1-diphosphate (PRPP) to UMP and diphosphate. In Acinetobacter baumannii (strain ATCC 17978 / DSM 105126 / CIP 53.77 / LMG 1025 / NCDC KC755 / 5377), this protein is Uracil phosphoribosyltransferase.